A 150-amino-acid chain; its full sequence is D-aminoacyl-tRNA deacylase (150 aa).

The Gly-cisPro motif, important for rejection of L-amino acids motif lies at 136-137 (GP).

Belongs to the DTD family. Homodimer.

It localises to the cytoplasm. It carries out the reaction glycyl-tRNA(Ala) + H2O = tRNA(Ala) + glycine + H(+). The catalysed reaction is a D-aminoacyl-tRNA + H2O = a tRNA + a D-alpha-amino acid + H(+). In terms of biological role, an aminoacyl-tRNA editing enzyme that deacylates mischarged D-aminoacyl-tRNAs. Also deacylates mischarged glycyl-tRNA(Ala), protecting cells against glycine mischarging by AlaRS. Acts via tRNA-based rather than protein-based catalysis; rejects L-amino acids rather than detecting D-amino acids in the active site. By recycling D-aminoacyl-tRNA to D-amino acids and free tRNA molecules, this enzyme counteracts the toxicity associated with the formation of D-aminoacyl-tRNA entities in vivo and helps enforce protein L-homochirality. The polypeptide is D-aminoacyl-tRNA deacylase (Macrococcus caseolyticus (strain JCSC5402) (Macrococcoides caseolyticum)).